The chain runs to 424 residues: Putative glutamate--cysteine ligase 2-3 (424 aa).

Disordered regions lie at residues 1–20 (MQMAGRGANRRGQHRSPVLV) and 405–424 (GAAADAHKDPAPMLTRVRRP).

Belongs to the glutamate--cysteine ligase type 2 family. YbdK subfamily.

It carries out the reaction L-cysteine + L-glutamate + ATP = gamma-L-glutamyl-L-cysteine + ADP + phosphate + H(+). Functionally, ATP-dependent carboxylate-amine ligase which exhibits weak glutamate--cysteine ligase activity. In Paenarthrobacter aurescens (strain TC1), this protein is Putative glutamate--cysteine ligase 2-3.